We begin with the raw amino-acid sequence, 320 residues long: tRNA uridine(34) hydroxylase (320 aa).

One can recognise a Rhodanese domain in the interval 123 to 217 (EDENTVILDA…YGKDPETKGL (95 aa)). The active-site Cysteine persulfide intermediate is Cys-177.

It belongs to the TrhO family.

The enzyme catalyses uridine(34) in tRNA + AH2 + O2 = 5-hydroxyuridine(34) in tRNA + A + H2O. Its function is as follows. Catalyzes oxygen-dependent 5-hydroxyuridine (ho5U) modification at position 34 in tRNAs. The polypeptide is tRNA uridine(34) hydroxylase (Staphylococcus epidermidis (strain ATCC 35984 / DSM 28319 / BCRC 17069 / CCUG 31568 / BM 3577 / RP62A)).